Reading from the N-terminus, the 99-residue chain is Small ribosomal subunit protein uS14m (99 aa).

The protein belongs to the universal ribosomal protein uS14 family.

It localises to the mitochondrion. The protein is Small ribosomal subunit protein uS14m (RPS14) of Marchantia polymorpha (Common liverwort).